Here is a 224-residue protein sequence, read N- to C-terminus: DeSI-like protein At4g17486 (224 aa).

Positions 26–163 (TPVYLNVYDL…FCNCLLPESI (138 aa)) constitute a PPPDE domain. Residues His-51 and Cys-125 contribute to the active site. The interval 176-201 (EFSDEDESNSEASSVSDEEGSEQHLI) is disordered.

This sequence belongs to the DeSI family.

This Arabidopsis thaliana (Mouse-ear cress) protein is DeSI-like protein At4g17486.